We begin with the raw amino-acid sequence, 492 residues long: Cysteine--tRNA ligase (492 aa).

Cysteine 29 provides a ligand contact to Zn(2+). A 'HIGH' region motif is present at residues leucine 31–histidine 41. Residues cysteine 229, histidine 254, and glutamate 258 each coordinate Zn(2+). The 'KMSKS' region signature appears at lysine 286–serine 290.

It belongs to the class-I aminoacyl-tRNA synthetase family. Requires Zn(2+) as cofactor.

Its subcellular location is the cytoplasm. It carries out the reaction tRNA(Cys) + L-cysteine + ATP = L-cysteinyl-tRNA(Cys) + AMP + diphosphate. This is Cysteine--tRNA ligase from Haloarcula marismortui (strain ATCC 43049 / DSM 3752 / JCM 8966 / VKM B-1809) (Halobacterium marismortui).